The primary structure comprises 83 residues: Large ribosomal subunit protein bL31B (83 aa).

The protein belongs to the bacterial ribosomal protein bL31 family. Type B subfamily. In terms of assembly, part of the 50S ribosomal subunit.

Functionally, binds the 23S rRNA. This Hydrogenovibrio crunogenus (strain DSM 25203 / XCL-2) (Thiomicrospira crunogena) protein is Large ribosomal subunit protein bL31B.